The sequence spans 280 residues: Protoheme IX farnesyltransferase (280 aa).

A run of 9 helical transmembrane segments spans residues 2–21 (VVAT…RAGL), 30–50 (AAVP…VVSG), 83–103 (LALW…LVGV), 105–125 (ATTG…YTPL), 131–151 (LSLP…WTSV), 160–180 (FLLF…ISLF), 206–226 (IVGY…LGVA), 229–249 (VYLG…VYGL), and 260–280 (QVFF…MIGA).

The protein belongs to the UbiA prenyltransferase family. Protoheme IX farnesyltransferase subfamily.

The protein localises to the cell inner membrane. The enzyme catalyses heme b + (2E,6E)-farnesyl diphosphate + H2O = Fe(II)-heme o + diphosphate. The protein operates within porphyrin-containing compound metabolism; heme O biosynthesis; heme O from protoheme: step 1/1. Converts heme B (protoheme IX) to heme O by substitution of the vinyl group on carbon 2 of heme B porphyrin ring with a hydroxyethyl farnesyl side group. The protein is Protoheme IX farnesyltransferase of Sorangium cellulosum (strain So ce56) (Polyangium cellulosum (strain So ce56)).